The chain runs to 545 residues: Carboxypeptidase Y homolog A (545 aa).

The N-terminal stretch at 1 to 17 (MKSLALALLVGGAIAAG) is a signal peptide. A propeptide spanning residues 18–123 (PQQQVLQAPV…KLEAYDLRVK (106 aa)) is cleaved from the precursor. Intrachain disulfides connect Cys-177-Cys-416, Cys-311-Cys-325, Cys-335-Cys-358, Cys-342-Cys-351, and Cys-380-Cys-386. Asn-208 carries an N-linked (GlcNAc...) asparagine glycan. Ser-264 is an active-site residue. Asp-455 is an active-site residue. Residues Asn-485, Asn-491, and Asn-506 are each glycosylated (N-linked (GlcNAc...) asparagine). The active site involves His-517.

This sequence belongs to the peptidase S10 family.

The protein localises to the vacuole. It carries out the reaction Release of a C-terminal amino acid with broad specificity.. Its function is as follows. Vacuolar carboxypeptidase involved in degradation of small peptides. Digests preferentially peptides containing an aliphatic or hydrophobic residue in P1' position, as well as methionine, leucine or phenylalanine in P1 position of ester substrate. This is Carboxypeptidase Y homolog A (CPYA) from Ajellomyces dermatitidis (strain ER-3 / ATCC MYA-2586) (Blastomyces dermatitidis).